The chain runs to 495 residues: RNA-binding KH domain-containing protein PEPPER (495 aa).

3 consecutive KH domains span residues 73-140 (DCVF…MDAV), 165-234 (FSSV…LEAI), and 340-403 (QVSQ…EQLI). The segment at 474-495 (GQTYGSEYRPASDVGGYSSYNL) is disordered.

Interacts with HUA1 and HEN4. In terms of tissue distribution, detected in roots, shoots, leaves, flowers and fruits.

It localises to the nucleus. Regulates vegetative and gynoecium development. In concert with HUA2, antagonizes FLK by positively regulating FLC probably at transcriptional and post-transcriptional levels, and thus acts as a negative regulator of flowering. The polypeptide is RNA-binding KH domain-containing protein PEPPER (Arabidopsis thaliana (Mouse-ear cress)).